Consider the following 1234-residue polypeptide: ATP-dependent helicase/nuclease subunit A (1234 aa).

The 474-residue stretch at 2–475 folds into the UvrD-like helicase ATP-binding domain; that stretch reads TQFTTSQQAA…IILAENFRST (474 aa). Residue 23–30 participates in ATP binding; that stretch reads ASAGSGKT. The 300-residue stretch at 507–806 folds into the UvrD-like helicase C-terminal domain; the sequence is YGALDYGDAH…KLMTIHKSKG (300 aa).

It belongs to the helicase family. AddA subfamily. In terms of assembly, heterodimer of AddA and AddB/RexB. The cofactor is Mg(2+).

It catalyses the reaction Couples ATP hydrolysis with the unwinding of duplex DNA by translocating in the 3'-5' direction.. It carries out the reaction ATP + H2O = ADP + phosphate + H(+). The heterodimer acts as both an ATP-dependent DNA helicase and an ATP-dependent, dual-direction single-stranded exonuclease. Recognizes the chi site generating a DNA molecule suitable for the initiation of homologous recombination. The AddA nuclease domain is required for chi fragment generation; this subunit has the helicase and 3' -&gt; 5' nuclease activities. The protein is ATP-dependent helicase/nuclease subunit A of Lacticaseibacillus paracasei (strain ATCC 334 / BCRC 17002 / CCUG 31169 / CIP 107868 / KCTC 3260 / NRRL B-441) (Lactobacillus paracasei).